The sequence spans 504 residues: Anaerobic nitric oxide reductase transcription regulator NorR (504 aa).

Position 57 is a 4-aspartylphosphate (Asp57). Positions 187-416 constitute a Sigma-54 factor interaction domain; that stretch reads MIGLSPGMTQ…LEHAIHRAVV (230 aa). Residues 215-222 and 278-287 contribute to the ATP site; these read GETGTGKE and ADNGTLFLDE. A DNA-binding region (H-T-H motif) is located at residues 479–498; the sequence is WAACARMLETDVANLHRLAK.

It functions in the pathway nitrogen metabolism; nitric oxide reduction. Functionally, required for the expression of anaerobic nitric oxide (NO) reductase, acts as a transcriptional activator for at least the norVW operon. Activation also requires sigma-54. The chain is Anaerobic nitric oxide reductase transcription regulator NorR from Shigella flexneri serotype 5b (strain 8401).